The following is a 411-amino-acid chain: Protein BTN1 (411 aa).

Positions 1-29 (MNSKQRVYAFFWIFGLVNNVLYVVILSAA) are cleaved as a signal peptide. Helical transmembrane passes span 41–61 (LVLLMDITPSLLIKVTAPFFI), 79–99 (IGMIFVSGKSLLLCMIGIAMA), 127–147 (SGTGGAGIVGSSVYMLLTSIF), 149–169 (LPIRLSLLSFTILPFAFLLYF), 281–300 (YVTYGTLYQLGVFISRSLAH), 307–329 (LYFLSALQGLNLVLTILQAWIYI), 334–356 (WPIMILIFYEGLLGGSSYVNTFL), and 371–391 (LGAVSIADSLGVFIAALVGLG).

The protein belongs to the battenin family.

The protein resides in the vacuole membrane. In terms of biological role, involved in vacuolar transport and vacuole pH homeostasis. Also required for cytokinesis. The sequence is that of Protein BTN1 (BTN1) from Candida glabrata (strain ATCC 2001 / BCRC 20586 / JCM 3761 / NBRC 0622 / NRRL Y-65 / CBS 138) (Yeast).